The primary structure comprises 421 residues: MTADLLLTHFNQVFCPKDLGHPLFGEEMKEAQVLEDGYIAVKDGKILAVGSGEPDASLVGPDTKIQSYEGKIATPGLIDCHTHLVYGGSREHEFAKKLAGVPYLEILAQGGGILSTVRATREASFDTLYDKSRRLLDYMLLHGVTTVEAKSGYGLDWETEKRQLDVVGALDRDHEIDLVSTFMAAHAVPPEYKGRSQEYLELIVEEMLPRVKAENLAEFCDIFCEKGVFTADESRYLLSKAKEMGFKLRIHADEIESIGGVDVAAELGATSAEHLMVATDEGIRKMAEAKVIGNLLPATTFSLMEDTYAPARKMLEAGMAITLTTDSNPGSCPTANLQFVMQLGCFMMRLTPVEVLNAVTINAAYSVNRQDKIGSFDTGKQADITILDAKNIDYPLYFFATNLTHQVYKAGKLVVDQGRIV.

Residues His-81 and His-83 each coordinate Fe(3+). Zn(2+)-binding residues include His-81 and His-83. 4-imidazolone-5-propanoate contacts are provided by Arg-90, Tyr-153, and His-186. Tyr-153 is a binding site for N-formimidoyl-L-glutamate. Residue His-251 coordinates Fe(3+). His-251 provides a ligand contact to Zn(2+). Glu-254 serves as a coordination point for 4-imidazolone-5-propanoate. Asp-326 contacts Fe(3+). Asp-326 provides a ligand contact to Zn(2+). N-formimidoyl-L-glutamate is bound by residues Asn-328 and Gly-330. Ser-331 is a binding site for 4-imidazolone-5-propanoate.

The protein belongs to the metallo-dependent hydrolases superfamily. HutI family. Zn(2+) is required as a cofactor. The cofactor is Fe(3+).

The protein resides in the cytoplasm. The catalysed reaction is 4-imidazolone-5-propanoate + H2O = N-formimidoyl-L-glutamate. The protein operates within amino-acid degradation; L-histidine degradation into L-glutamate; N-formimidoyl-L-glutamate from L-histidine: step 3/3. Catalyzes the hydrolytic cleavage of the carbon-nitrogen bond in imidazolone-5-propanoate to yield N-formimidoyl-L-glutamate. It is the third step in the universal histidine degradation pathway. The sequence is that of Imidazolonepropionase from Streptococcus sanguinis (strain SK36).